Here is a 185-residue protein sequence, read N- to C-terminus: Meiotically up-regulated gene 5 protein (185 aa).

The protein localises to the cytoplasm. In terms of biological role, required for correct meiotic chromosome segregation. This Schizosaccharomyces pombe (strain 972 / ATCC 24843) (Fission yeast) protein is Meiotically up-regulated gene 5 protein (mug5).